The following is a 477-amino-acid chain: Endoglucanase A (477 aa).

The signal sequence occupies residues 1-32 (MKNVKKRVGVVLLILAVLGVYMLAMPANTVSA). Glu-95 acts as the Proton donor in catalysis. The active-site Nucleophile is Asp-152. One can recognise a Dockerin domain in the interval 411 to 477 (PQVVYGDVNG…LIKSIPHLPY (67 aa)).

The protein belongs to the glycosyl hydrolase 8 (cellulase D) family.

It carries out the reaction Endohydrolysis of (1-&gt;4)-beta-D-glucosidic linkages in cellulose, lichenin and cereal beta-D-glucans.. Its function is as follows. This enzyme catalyzes the endohydrolysis of 1,4-beta-glucosidic linkages in cellulose, lichenin and cereal beta-D-glucans. The polypeptide is Endoglucanase A (celA) (Acetivibrio thermocellus (strain ATCC 27405 / DSM 1237 / JCM 9322 / NBRC 103400 / NCIMB 10682 / NRRL B-4536 / VPI 7372) (Clostridium thermocellum)).